Reading from the N-terminus, the 447-residue chain is Tubulin beta-6 chain (447 aa).

GTP is bound by residues Q11, E69, S138, G142, T143, G144, N204, and N226. E69 provides a ligand contact to Mg(2+). Positions 426-447 are disordered; that stretch reads QDATAEEEGEFDEDEELDDGMM. The segment covering 429 to 447 has biased composition (acidic residues); the sequence is TAEEEGEFDEDEELDDGMM.

The protein belongs to the tubulin family. Dimer of alpha and beta chains. A typical microtubule is a hollow water-filled tube with an outer diameter of 25 nm and an inner diameter of 15 nM. Alpha-beta heterodimers associate head-to-tail to form protofilaments running lengthwise along the microtubule wall with the beta-tubulin subunit facing the microtubule plus end conferring a structural polarity. Microtubules usually have 13 protofilaments but different protofilament numbers can be found in some organisms and specialized cells. Mg(2+) serves as cofactor.

The protein resides in the cytoplasm. It is found in the cytoskeleton. In terms of biological role, tubulin is the major constituent of microtubules, a cylinder consisting of laterally associated linear protofilaments composed of alpha- and beta-tubulin heterodimers. Microtubules grow by the addition of GTP-tubulin dimers to the microtubule end, where a stabilizing cap forms. Below the cap, tubulin dimers are in GDP-bound state, owing to GTPase activity of alpha-tubulin. The protein is Tubulin beta-6 chain (TUBB6) of Ectocarpus variabilis (Brown alga).